The primary structure comprises 305 residues: MEDGELIKYFKSQMKGDPNMASAVAAIQTLLEFLKRDKGETIQGLRAHLTKAIETLCAVDSSVAVSSGGELFLRFISLTSLEYSDYSKCKKIMIERGELFLSRISLSRTKIASLCHAFIKDGARILTHAYSRVVLRVLEEAVAAKKRFSVYITESQPDLSGKKMAKALCHLNVPVTVVLDAAVGYIMEKVDLVIVGAEGVVENGGIINKIGTNQMAVCAKAQNKPFYVVAESFKFVRLFPLNQQDVPDKFKYKADTLKSVQAGQDLKEEHPWVDYTSPSLITLLFTDLGVLTPSAVSDELIKLYL.

Lys-35 is modified (N6-acetyllysine).

Belongs to the eIF-2B alpha/beta/delta subunits family. As to quaternary structure, component of the translation initiation factor 2B (eIF2B) complex which is a heterodecamer of two sets of five different subunits: alpha, beta, gamma, delta and epsilon. Subunits alpha, beta and delta comprise a regulatory subcomplex and subunits epsilon and gamma comprise a catalytic subcomplex. Within the complex, the hexameric regulatory complex resides at the center, with the two heterodimeric catalytic subcomplexes bound on opposite sides.

Its subcellular location is the cytoplasm. The protein localises to the cytosol. Activated by the chemical integrated stress response (ISR) inhibitor ISRIB which stimulates guanine nucleotide exchange factor activity for both phosphorylated and unphosphorylated eIF2. Its function is as follows. Acts as a component of the translation initiation factor 2B (eIF2B) complex, which catalyzes the exchange of GDP for GTP on eukaryotic initiation factor 2 (eIF2) gamma subunit. Its guanine nucleotide exchange factor activity is repressed when bound to eIF2 complex phosphorylated on the alpha subunit, thereby limiting the amount of methionyl-initiator methionine tRNA available to the ribosome and consequently global translation is repressed. The sequence is that of Translation initiation factor eIF2B subunit alpha (Eif2b1) from Rattus norvegicus (Rat).